We begin with the raw amino-acid sequence, 420 residues long: Diphosphomevalonate decarboxylase 2 (420 aa).

Position 25 to 28 (25 to 28 (YWGK)) interacts with (R)-5-diphosphomevalonate. The short motif at 42–50 (SVTLDPDHL) is the Peroxisomal targeting signal PTS2 element. (R)-5-diphosphomevalonate is bound by residues arginine 80, 163-168 (SGSACR), and threonine 219.

Belongs to the diphosphomevalonate decarboxylase family. In terms of assembly, homodimer.

Its subcellular location is the peroxisome. It carries out the reaction (R)-5-diphosphomevalonate + ATP = isopentenyl diphosphate + ADP + phosphate + CO2. The protein operates within isoprenoid biosynthesis; isopentenyl diphosphate biosynthesis via mevalonate pathway; isopentenyl diphosphate from (R)-mevalonate: step 3/3. Its function is as follows. Performs the first committed step in the biosynthesis of isoprene-containing compounds such as sterols and terpenoids. Component of the triterpenes (e.g. ginsenosides or panaxosides) and phytosterols biosynthetic pathways. Promotes the accumulation of stigmasterol and beta-sitosterol. This Panax ginseng (Korean ginseng) protein is Diphosphomevalonate decarboxylase 2.